The following is a 383-amino-acid chain: Chaperone protein DnaJ (383 aa).

Residues 6–70 (DYYDVLGVGR…QKRAAYDQYG (65 aa)) form the J domain. Residues 140–222 (GKETKISYSR…CHGTGREEER (83 aa)) form a CR-type zinc finger. Cysteine 153, cysteine 156, cysteine 170, cysteine 173, cysteine 196, cysteine 199, cysteine 210, and cysteine 213 together coordinate Zn(2+). CXXCXGXG motif repeat units follow at residues 153 to 160 (CHTCHGSG), 170 to 177 (CHKCHGAG), 196 to 203 (CDVCGGTG), and 210 to 217 (CDTCHGTG).

This sequence belongs to the DnaJ family. In terms of assembly, homodimer. It depends on Zn(2+) as a cofactor.

Its subcellular location is the cytoplasm. Functionally, participates actively in the response to hyperosmotic and heat shock by preventing the aggregation of stress-denatured proteins and by disaggregating proteins, also in an autonomous, DnaK-independent fashion. Unfolded proteins bind initially to DnaJ; upon interaction with the DnaJ-bound protein, DnaK hydrolyzes its bound ATP, resulting in the formation of a stable complex. GrpE releases ADP from DnaK; ATP binding to DnaK triggers the release of the substrate protein, thus completing the reaction cycle. Several rounds of ATP-dependent interactions between DnaJ, DnaK and GrpE are required for fully efficient folding. Also involved, together with DnaK and GrpE, in the DNA replication of plasmids through activation of initiation proteins. The polypeptide is Chaperone protein DnaJ (Latilactobacillus sakei (Lactobacillus sakei)).